The following is a 359-amino-acid chain: 4-galactosyl-N-acetylglucosaminide 3-alpha-L-fucosyltransferase 9 (359 aa).

At 1 to 11 (MTSTSKGILRP) the chain is on the cytoplasmic side. A helical; Signal-anchor for type II membrane protein membrane pass occupies residues 12 to 32 (FLIVCIILGCFMACLLIYIKP). The Lumenal portion of the chain corresponds to 33–359 (TNSWVFSPME…VGNLEKWFWN (327 aa)). N62 carries N-linked (GlcNAc...) asparagine glycosylation. An acceptor-binding region spans residues 63–168 (ETTILVWVWP…RRDSDIQVPY (106 aa)). Q75 provides a ligand contact to a beta-D-galactosyl-(1-&gt;4)-N-acetyl-beta-D-glucosaminyl derivative. 3 disulfide bridges follow: C82/C335, C91/C338, and C190/C238. N101 is a glycosylation site (N-linked (GlcNAc...) asparagine). Residue E137 participates in a beta-D-galactosyl-(1-&gt;4)-N-acetyl-beta-D-glucosaminyl derivative binding. E137 functions as the Nucleophile in the catalytic mechanism. Residue E137 coordinates GDP-beta-L-fucose. N153 carries N-linked (GlcNAc...) asparagine glycosylation. Y168, V192, S194, N195, R202, V226, Y241, N246, Y252, E255, and K256 together coordinate GDP-beta-L-fucose. The interval 169-326 (GFLTVSTNPF…NWRKDFTVNL (158 aa)) is donor-binding. Residues 327-359 (PRFWESHACLACDHVKRHQEYKSVGNLEKWFWN) form an acceptor-binding region.

This sequence belongs to the glycosyltransferase 10 family. Homodimer. Post-translationally, N-glycosylated with complex-type N-glycans. In terms of tissue distribution, mainly detected in brain and kidney.

The protein localises to the golgi apparatus. The protein resides in the trans-Golgi network membrane. Its subcellular location is the golgi apparatus membrane. It catalyses the reaction a beta-D-galactosyl-(1-&gt;4)-N-acetyl-beta-D-glucosaminyl derivative + GDP-beta-L-fucose = a beta-D-galactosyl-(1-&gt;4)-[alpha-L-fucosyl-(1-&gt;3)]-N-acetyl-beta-D-glucosaminyl derivative + GDP + H(+). The catalysed reaction is an alpha-Neu5Ac-(2-&gt;3)-beta-D-Gal-(1-&gt;4)-beta-D-GlcNAc-(1-&gt;3)-beta-D-Gal-(1-&gt;4)-beta-D-GlcNAc derivative + GDP-beta-L-fucose = an alpha-Neu5Ac-(2-&gt;3)-beta-D-Gal-(1-&gt;4)-beta-D-GlcNAc-(1-&gt;3)-beta-D-Gal-(1-&gt;4)-[alpha-L-Fuc-(1-&gt;3)]-beta-D-GlcNAc derivative + GDP + H(+). The enzyme catalyses alpha-N-glycoloylneuraminosyl-(2-&gt;3)-beta-D-galactosyl-(1-&gt;4)-N-acetyl-beta-D-glucosaminyl-(1-&gt;3)-beta-D-galactosyl-(1-&gt;4)-N-acetyl-beta-D-glucosaminyl-(1-&gt;3)-beta-D-galactosyl-(1-&gt;4)-beta-D-glucosyl-(1&lt;-&gt;1')-ceramide + GDP-beta-L-fucose = alpha-N-glycoloylneuraminosyl-(2-&gt;3)-beta-D-galactosyl-(1-&gt;4)-N-acetyl-beta-D-glucosaminyl-(1-&gt;3)-beta-D-galactosyl-(1-&gt;4)-[alpha-L-fucosyl-(1-&gt;3)]-N-acetyl-beta-D-glucosaminyl-(1-&gt;3)-beta-D-galactosyl-(1-&gt;4)-beta-D-glucosyl-(1&lt;-&gt;1')-ceramide + GDP + H(+). It carries out the reaction alpha-D-galactosyl-(1-&gt;3)-beta-D-galactosyl-(1-&gt;4)-N-acetyl-beta-D-glucosaminyl-(1-&gt;3)-beta-D-galactosyl-(1-&gt;4)-beta-D-glucosyl-(1&lt;-&gt;1')-ceramide + GDP-beta-L-fucose = a neolactoside IV(3)-alpha-Gal,III(3)-alpha-Fuc-nLc4Cer + GDP + H(+). It catalyses the reaction a neolactoside nLc4Cer + GDP-beta-L-fucose = a neolactoside III(3)-alpha-Fuc-nLc4Cer + GDP + H(+). The catalysed reaction is an N-acetyl-alpha-neuraminyl-(2-&gt;3)-beta-D-galactosyl-(1-&gt;4)-N-acetyl-beta-D-glucosaminyl derivative + GDP-beta-L-fucose = an alpha-Neu5Ac-(2-&gt;3)-beta-D-Gal-(1-&gt;4)-[alpha-L-Fuc-(1-&gt;3)]-beta-D-GlcNAc derivative + GDP + H(+). The enzyme catalyses beta-D-Gal-(1-&gt;4)-beta-D-GlcNAc-(1-&gt;3)-beta-D-Gal-(1-&gt;4)-D-Glc + GDP-beta-L-fucose = beta-D-Gal-(1-&gt;4)-[alpha-L-Fuc-(1-&gt;3)]-beta-D-GlcNAc-(1-&gt;3)-beta-D-Gal-(1-&gt;4)-D-Glc + GDP + H(+). It carries out the reaction an alpha-L-Fuc-(1-&gt;2)-beta-D-Gal-(1-&gt;4)-beta-D-GlcNAc derivative + GDP-beta-L-fucose = an alpha-L-Fuc-(1-&gt;2)-beta-D-Gal-(1-&gt;4)-[alpha-L-Fuc-(1-&gt;3)]-beta-D-GlcNAc derivative + GDP + H(+). The protein operates within protein modification; protein glycosylation. It functions in the pathway glycolipid biosynthesis. Its activity is regulated as follows. Activated by Mn2+. Catalyzes alpha(1-&gt;3) linkage of fucosyl moiety transferred from GDP-beta-L-fucose to N-acetyl glucosamine (GlcNAc) within type 2 lactosamine (LacNAc, beta-D-Gal-(1-&gt;4)-beta-D-GlcNAc-) glycan attached to glycolipids and N- or O-linked glycoproteins. Fucosylates distal type 2 LacNAc and its fucosylated (H-type 2 LacNAc) and sialylated (sialyl-type 2 LacNAc) derivatives to form Lewis x (Lex) (CD15) and Lewis y (Ley) antigenic epitopes involved in cell adhesion and differentiation. Generates Lex epitopes in the brain, presumably playing a role in the maintenance of neuronal stemness and neurite outgrowth in progenitor neural cells. Fucosylates the internal type 2 LacNAc unit of the polylactosamine chain to form VIM-2 antigen that serves as recognition epitope for SELE. Can also modify milk oligosaccharides in particular type 2 tetrasaccharide LNnT. This is 4-galactosyl-N-acetylglucosaminide 3-alpha-L-fucosyltransferase 9 from Mus musculus (Mouse).